The chain runs to 292 residues: Protoheme IX farnesyltransferase (292 aa).

Helical transmembrane passes span 13–33 (ILFGNFITTLGGFFLAAQGSI), 35–55 (ILLLLLTLIGTTLVVASGCVV), 84–104 (VALVYAFVLGVMGFSILWFGV), 106–126 (GYAFLFAMIGFIVYVGFYSLW), 135–155 (TVIGSISGASPPVIGYTAVTH), 161–181 (ALLLFLAYALWQMPHSWAIAI), 206–226 (IECVIYILLFAAVLNGLYCFG), 231–251 (FFLITFNALTAYWFYLSIIGF), and 263–283 (FFLYSVILITLLSLSFSFTYQ).

Belongs to the UbiA prenyltransferase family. Protoheme IX farnesyltransferase subfamily.

The protein resides in the cell inner membrane. The enzyme catalyses heme b + (2E,6E)-farnesyl diphosphate + H2O = Fe(II)-heme o + diphosphate. The protein operates within porphyrin-containing compound metabolism; heme O biosynthesis; heme O from protoheme: step 1/1. In terms of biological role, converts heme B (protoheme IX) to heme O by substitution of the vinyl group on carbon 2 of heme B porphyrin ring with a hydroxyethyl farnesyl side group. The chain is Protoheme IX farnesyltransferase from Acinetobacter baumannii (strain AB307-0294).